Consider the following 298-residue polypeptide: MIIKRREYMRIADYSVTKAVLDRHGFTFKKSFGQNFLTDTNILQKIVDTAEIDQNVNVIEIGPGIGALTEFLAENAAEVMAFEIDDRLVPILADTLRDFDNVQVVNQDILKADLQTQIKQFKNPDLPIKVVANLPYYITTPILMHLIESKIPFQEFVVMMQREVADRISAEPNTKAYGSLSIAVQYYMTAKVAFIVPRTVFVPAPNVDSAILKMVRRDQPLIEVKDEDFFFRVSRLSFVHRRKTLWNNLTSHFGKSEDIKAKLEKGLALADIKPSIRGEALSIQDFGKLADALKEVGL.

S-adenosyl-L-methionine is bound by residues asparagine 35, leucine 37, glycine 62, glutamate 83, aspartate 108, and asparagine 133.

It belongs to the class I-like SAM-binding methyltransferase superfamily. rRNA adenine N(6)-methyltransferase family. RsmA subfamily.

The protein localises to the cytoplasm. It carries out the reaction adenosine(1518)/adenosine(1519) in 16S rRNA + 4 S-adenosyl-L-methionine = N(6)-dimethyladenosine(1518)/N(6)-dimethyladenosine(1519) in 16S rRNA + 4 S-adenosyl-L-homocysteine + 4 H(+). In terms of biological role, specifically dimethylates two adjacent adenosines (A1518 and A1519) in the loop of a conserved hairpin near the 3'-end of 16S rRNA in the 30S particle. May play a critical role in biogenesis of 30S subunits. This Streptococcus pyogenes serotype M12 (strain MGAS9429) protein is Ribosomal RNA small subunit methyltransferase A.